Here is a 618-residue protein sequence, read N- to C-terminus: MSQQPSGQGISEKIQNLASKYGQMLNELDKAVVGRYDSKTAVLLGLMTGFPTLLVGDRGVAKTMLIELLPKVIEGLNDKDVFVVQVSEYTDPSEIFGVPDIQKLVNGEGFDLKTDGFLPSAKVAFIDEIFYTSEKVRSTLLRAINEKKINVFGKEIKLPWIAFYAAANKVDLENPSDLALLDRFNIRGFILDIPFIMDNVDKLADETMQVMSASENPELKKVITLNDVEETRKVLDQMVRDFFNSKEALDLLKKVYYVIGDILASLKDTDAYESFYRSADEDYTHISTRARKRLNYVAASIALVRGATKPTYLDYLLALLFTLPVDVQSFKIVRDKIRDEWNKAVSGQEDTDATKVILDYLNDRLLTEAFIKASKMFDTSRNAIENLGKKIPLAQPFENREPTLVSSLPKIVEFLTRPEPISYSIWLMTKDKNGKINVGREKTGELSGNPLQKLEELLKLLESYRKVLDEADSPEERKTLILGLSKLVVNFGSTSSYQNGYKVPFLTLLDAISLFINNLKSTDVQKVIEQVVNDAKNNALKSISNGAPEVSGWEVFAPLLEQYGMKVPGILEAKRQIEDRAKGLSKNLDNTVTEIMNAGEKIMEMDDEMTKTFISLAS.

Residues 570–598 adopt a coiled-coil conformation; that stretch reads ILEAKRQIEDRAKGLSKNLDNTVTEIMNA.

The protein localises to the virion. This chain is Structural protein ORF618, found in Acidianus two-tailed virus (ATV).